Reading from the N-terminus, the 307-residue chain is Elongation factor Ts (307 aa).

Residues 79-82 (TDFV) form an involved in Mg(2+) ion dislocation from EF-Tu region.

This sequence belongs to the EF-Ts family.

The protein localises to the cytoplasm. Functionally, associates with the EF-Tu.GDP complex and induces the exchange of GDP to GTP. It remains bound to the aminoacyl-tRNA.EF-Tu.GTP complex up to the GTP hydrolysis stage on the ribosome. The protein is Elongation factor Ts (tsf) of Bartonella quintana (strain Toulouse) (Rochalimaea quintana).